The chain runs to 276 residues: Glutamate 5-kinase (276 aa).

Lys14 serves as a coordination point for ATP. Positions 54, 141, and 157 each coordinate substrate. ATP contacts are provided by residues 177–178 (SD) and 219–225 (TGGMLTK).

Belongs to the glutamate 5-kinase family.

It is found in the cytoplasm. It carries out the reaction L-glutamate + ATP = L-glutamyl 5-phosphate + ADP. The protein operates within amino-acid biosynthesis; L-proline biosynthesis; L-glutamate 5-semialdehyde from L-glutamate: step 1/2. Functionally, catalyzes the transfer of a phosphate group to glutamate to form L-glutamate 5-phosphate. The protein is Glutamate 5-kinase of Listeria monocytogenes serotype 4a (strain HCC23).